Reading from the N-terminus, the 69-residue chain is DNA gyrase inhibitor YacG (69 aa).

Positions 14, 17, 33, and 37 each coordinate Zn(2+).

It belongs to the DNA gyrase inhibitor YacG family. In terms of assembly, interacts with GyrB. Zn(2+) is required as a cofactor.

Inhibits all the catalytic activities of DNA gyrase by preventing its interaction with DNA. Acts by binding directly to the C-terminal domain of GyrB, which probably disrupts DNA binding by the gyrase. The protein is DNA gyrase inhibitor YacG of Aliivibrio salmonicida (strain LFI1238) (Vibrio salmonicida (strain LFI1238)).